The primary structure comprises 593 residues: Aspartate--tRNA(Asp/Asn) ligase (593 aa).

E172 lines the L-aspartate pocket. Positions 196–199 (QLFK) are aspartate. R218 provides a ligand contact to L-aspartate. ATP-binding positions include 218–220 (RDE) and Q227. H450 lines the L-aspartate pocket. E484 lines the ATP pocket. Residue R491 participates in L-aspartate binding. 536 to 539 (GLDR) provides a ligand contact to ATP.

It belongs to the class-II aminoacyl-tRNA synthetase family. Type 1 subfamily. In terms of assembly, homodimer.

It localises to the cytoplasm. The catalysed reaction is tRNA(Asx) + L-aspartate + ATP = L-aspartyl-tRNA(Asx) + AMP + diphosphate. In terms of biological role, aspartyl-tRNA synthetase with relaxed tRNA specificity since it is able to aspartylate not only its cognate tRNA(Asp) but also tRNA(Asn). Reaction proceeds in two steps: L-aspartate is first activated by ATP to form Asp-AMP and then transferred to the acceptor end of tRNA(Asp/Asn). The protein is Aspartate--tRNA(Asp/Asn) ligase of Nitrosomonas eutropha (strain DSM 101675 / C91 / Nm57).